Reading from the N-terminus, the 198-residue chain is Na(+)-translocating NADH-quinone reductase subunit E (198 aa).

Transmembrane regions (helical) follow at residues 11-31 (SIFIENMALSFFLGMCTFLAV), 39-59 (FGLGVAVVVVLTIAVPVNNLV), 77-97 (FLNFITFIGVIAALVQILEMV), 110-130 (GIFLPLITVNCAIFGGVSFMV), 140-160 (IVYGFGSGVGWMLAIVALAGI), and 176-196 (LGITFITVGLMALGFMSFSGV).

Belongs to the NqrDE/RnfAE family. In terms of assembly, composed of six subunits; NqrA, NqrB, NqrC, NqrD, NqrE and NqrF.

Its subcellular location is the cell inner membrane. It catalyses the reaction a ubiquinone + n Na(+)(in) + NADH + H(+) = a ubiquinol + n Na(+)(out) + NAD(+). Its function is as follows. NQR complex catalyzes the reduction of ubiquinone-1 to ubiquinol by two successive reactions, coupled with the transport of Na(+) ions from the cytoplasm to the periplasm. NqrA to NqrE are probably involved in the second step, the conversion of ubisemiquinone to ubiquinol. In Vibrio campbellii (strain ATCC BAA-1116), this protein is Na(+)-translocating NADH-quinone reductase subunit E.